Consider the following 226-residue polypeptide: MSSVTKRPRAKRIRLPLEIIDTILQYLDPILHAKVVGLTTRVKCRLLRDNNVEDYLKLTPASYHPTTDQFICNYLGITNQPMAPYLVPLLSFGKASCVFFNKCIPEDVRIVTLNWPLPLLENFLSKQFLWYKLARKLIEHERRMDRCVTPSTVQINLYDDNEDYLNCFNCFNCCKDNLVSFNCCIVDCNINDMNRCPDLQIDVYLDDNIISLYLYFLFRIYRIVKE.

Residues 9–58 enclose the F-box domain; sequence RAKRIRLPLEIIDTILQYLDPILHAKVVGLTTRVKCRLLRDNNVEDYLKL.

Interacts with host S-phase kinase-associated protein 1/SKP1.

It localises to the host nucleus. It participates in protein degradation; proteasomal ubiquitin-dependent pathway. F-box protein that manipulates the host DNA damage response (DRR) in order to promote viral multiplication. Acts as a substrate recognition component of SKP1/Cullin/F-box (SCF) complexes for targeted protein polyubiquitination. The sequence is that of Late expression factor 7 (LEF-7) from Lepidoptera (butterflies and moths).